The chain runs to 101 residues: Protein RnfH (101 aa).

Belongs to the UPF0125 (RnfH) family.

This chain is Protein RnfH, found in Coxiella burnetii (strain RSA 331 / Henzerling II).